Here is a 264-residue protein sequence, read N- to C-terminus: Glutamate racemase (264 aa).

Residues 10 to 11 and 42 to 43 each bind substrate; these read DS and YG. Cys-73 functions as the Proton donor/acceptor in the catalytic mechanism. 74 to 75 is a substrate binding site; that stretch reads NT. The active-site Proton donor/acceptor is the Cys-183. 184–185 is a binding site for substrate; it reads TH.

It belongs to the aspartate/glutamate racemases family.

The enzyme catalyses L-glutamate = D-glutamate. It participates in cell wall biogenesis; peptidoglycan biosynthesis. Functionally, provides the (R)-glutamate required for cell wall biosynthesis. The sequence is that of Glutamate racemase from Streptococcus pyogenes serotype M18 (strain MGAS8232).